Consider the following 525-residue polypeptide: GMP synthase [glutamine-hydrolyzing] (525 aa).

Residues 8-207 (KILILDFGSQ…ALEICACAAN (200 aa)) form the Glutamine amidotransferase type-1 domain. The active-site Nucleophile is the cysteine 85. Residues histidine 181 and glutamate 183 contribute to the active site. Residues 208-400 (WKPASIIEDA…LGLPYNMLYR (193 aa)) form the GMPS ATP-PPase domain. Residue 235-241 (SGGVDSS) coordinates ATP.

As to quaternary structure, homodimer.

It carries out the reaction XMP + L-glutamine + ATP + H2O = GMP + L-glutamate + AMP + diphosphate + 2 H(+). Its pathway is purine metabolism; GMP biosynthesis; GMP from XMP (L-Gln route): step 1/1. Catalyzes the synthesis of GMP from XMP. The polypeptide is GMP synthase [glutamine-hydrolyzing] (Shewanella halifaxensis (strain HAW-EB4)).